A 254-amino-acid chain; its full sequence is Ribosomal RNA large subunit methyltransferase E (254 aa).

Residues 1–28 (MTTPPRGPDGRPLKVRVKKSRGRTTSSQ) form a disordered region. Residues 13 to 22 (LKVRVKKSRG) show a composition bias toward basic residues. S-adenosyl-L-methionine-binding residues include glycine 80, tryptophan 82, aspartate 103, aspartate 119, and aspartate 143. Residue lysine 183 is the Proton acceptor of the active site. A disordered region spans residues 231 to 254 (DRAETDDAGTDGTGTAEAQAPRDQ).

This sequence belongs to the class I-like SAM-binding methyltransferase superfamily. RNA methyltransferase RlmE family.

Its subcellular location is the cytoplasm. The enzyme catalyses uridine(2552) in 23S rRNA + S-adenosyl-L-methionine = 2'-O-methyluridine(2552) in 23S rRNA + S-adenosyl-L-homocysteine + H(+). Specifically methylates the uridine in position 2552 of 23S rRNA at the 2'-O position of the ribose in the fully assembled 50S ribosomal subunit. This is Ribosomal RNA large subunit methyltransferase E from Xanthobacter autotrophicus (strain ATCC BAA-1158 / Py2).